The primary structure comprises 318 residues: MDIDASVENISKDTAEIIEVEELKELLKKDEKRAYVGFEPSGKVHLGHALTIKKMKTLQDAGFKITIFIANLHAYLNNKGTLDELNEVAKYNIKCFKALGLSEDTNFILGSDRMTPEYITEVFKAAKLTTIQRAQRSMALVSRNETHDVAQTLYPIMQALDIHDLDADIAVGGMEQRKIHMLAREILPRLGYRPPVCIHIPLIHGTDGSDKMSSSKGNFIAIDDTPKEIKNKINKSFCPIGVSEDNPVMEIAHYYIFDTHEKILIERPEKFGGNLELTEEELIQTYENEDLHPMDLKNTVSKYLIERLAPAREYMENN.

Position 35 (Tyr35) interacts with L-tyrosine. The short motif at 40 to 48 is the 'HIGH' region element; the sequence is PSGKVHLGH. Residues Tyr154, Gln158, Asp161, and Gln176 each contribute to the L-tyrosine site. The 'KMSKS' region signature appears at 211 to 215; that stretch reads KMSSS. Ser214 contributes to the ATP binding site.

It belongs to the class-I aminoacyl-tRNA synthetase family. TyrS type 3 subfamily. Homodimer.

It is found in the cytoplasm. It carries out the reaction tRNA(Tyr) + L-tyrosine + ATP = L-tyrosyl-tRNA(Tyr) + AMP + diphosphate + H(+). Its function is as follows. Catalyzes the attachment of tyrosine to tRNA(Tyr) in a two-step reaction: tyrosine is first activated by ATP to form Tyr-AMP and then transferred to the acceptor end of tRNA(Tyr). This Methanosphaera stadtmanae (strain ATCC 43021 / DSM 3091 / JCM 11832 / MCB-3) protein is Tyrosine--tRNA ligase.